The sequence spans 417 residues: NADH-quinone oxidoreductase subunit D (417 aa).

Belongs to the complex I 49 kDa subunit family. NDH-1 is composed of 14 different subunits. Subunits NuoB, C, D, E, F, and G constitute the peripheral sector of the complex.

It is found in the cell inner membrane. It catalyses the reaction a quinone + NADH + 5 H(+)(in) = a quinol + NAD(+) + 4 H(+)(out). In terms of biological role, NDH-1 shuttles electrons from NADH, via FMN and iron-sulfur (Fe-S) centers, to quinones in the respiratory chain. The immediate electron acceptor for the enzyme in this species is believed to be ubiquinone. Couples the redox reaction to proton translocation (for every two electrons transferred, four hydrogen ions are translocated across the cytoplasmic membrane), and thus conserves the redox energy in a proton gradient. The chain is NADH-quinone oxidoreductase subunit D from Chromobacterium violaceum (strain ATCC 12472 / DSM 30191 / JCM 1249 / CCUG 213 / NBRC 12614 / NCIMB 9131 / NCTC 9757 / MK).